The following is a 388-amino-acid chain: Succinate--CoA ligase [ADP-forming] subunit beta (388 aa).

The 236-residue stretch at 9 to 244 folds into the ATP-grasp domain; sequence KKLFAEYGLP…PSQDDPREAH (236 aa). ATP contacts are provided by residues lysine 46, 53-55, glutamate 99, threonine 102, and glutamate 107; that span reads GRG. Residues asparagine 199 and aspartate 213 each coordinate Mg(2+). Residues asparagine 264 and 321–323 each bind substrate; that span reads GIV.

Belongs to the succinate/malate CoA ligase beta subunit family. Heterotetramer of two alpha and two beta subunits. Requires Mg(2+) as cofactor.

The enzyme catalyses succinate + ATP + CoA = succinyl-CoA + ADP + phosphate. The catalysed reaction is GTP + succinate + CoA = succinyl-CoA + GDP + phosphate. The protein operates within carbohydrate metabolism; tricarboxylic acid cycle; succinate from succinyl-CoA (ligase route): step 1/1. Its function is as follows. Succinyl-CoA synthetase functions in the citric acid cycle (TCA), coupling the hydrolysis of succinyl-CoA to the synthesis of either ATP or GTP and thus represents the only step of substrate-level phosphorylation in the TCA. The beta subunit provides nucleotide specificity of the enzyme and binds the substrate succinate, while the binding sites for coenzyme A and phosphate are found in the alpha subunit. This is Succinate--CoA ligase [ADP-forming] subunit beta from Aeromonas salmonicida (strain A449).